Reading from the N-terminus, the 359-residue chain is Heat-inducible transcription repressor HrcA (359 aa).

It belongs to the HrcA family.

Its function is as follows. Negative regulator of class I heat shock genes (grpE-dnaK-dnaJ and groELS operons). Prevents heat-shock induction of these operons. The protein is Heat-inducible transcription repressor HrcA of Rhizobium meliloti (strain 1021) (Ensifer meliloti).